We begin with the raw amino-acid sequence, 303 residues long: Plasmodesmata-located protein 1 (303 aa).

Positions 1–21 (MKLTYQFFIFWFFLPFFAISG) are cleaved as a signal peptide. Topologically, residues 22–268 (DDDYKNLIFK…GEKRQHTERT (247 aa)) are extracellular. 2 consecutive Gnk2-homologous domains span residues 27–136 (NLIF…SSGF) and 141–248 (GTEM…YYSH). 6 cysteine pairs are disulfide-bonded: Cys-33–Cys-108, Cys-84–Cys-93, Cys-96–Cys-127, Cys-149–Cys-226, Cys-202–Cys-211, and Cys-214–Cys-239. Residues 269–289 (IALAVGGVFVLGFVIVCLLVL) form a helical membrane-spanning segment. Positions 269–289 (IALAVGGVFVLGFVIVCLLVL) are necessary and sufficient for plasmodesmal targeting. Residues 290–303 (RSAMKKKSNKYDAY) are Cytoplasmic-facing.

This sequence belongs to the cysteine-rich repeat secretory protein family. Plasmodesmata-located proteins (PDLD) subfamily. Interacts with AZI1. Interacts with PDLP5. Does not interact with DIR1. In terms of assembly, (Microbial infection) Interacts with Grapevine fanleaf virus (GFLV) 2B-MP. Interacts with Cauliflower mosaic virus (CaMV) movement protein. Highly expressed in cell suspension. Expressed in epidermal and spongy mesophyll cells, and the cell wall interface at the base of the leaf trichome (at protein level). Expressed in haustoria-containing cells.

The protein localises to the cell membrane. It is found in the cell junction. It localises to the plasmodesma. Modulates cell-to-cell trafficking. Required for systemic acquired resistance (SAR) which is mediated by the signaling molecules azelaic acid (AzA), glycerol-3-phosphate (G3P), and salicylic acid (SA). Required for the proper localization and stability of AZI1 which is involved in SAR. Mediates callose deposition during downy mildew fungal infection around haustoria. Haustoria are unicellular protrusions from hyphae and function as the site of molecular exchange of nutrients and effectors between host and pathogen. The chain is Plasmodesmata-located protein 1 from Arabidopsis thaliana (Mouse-ear cress).